A 180-amino-acid chain; its full sequence is ATP-dependent protease subunit HslV (180 aa).

The active site involves threonine 2. Residues glycine 157, cysteine 160, and threonine 163 each coordinate Na(+).

Belongs to the peptidase T1B family. HslV subfamily. As to quaternary structure, a double ring-shaped homohexamer of HslV is capped on each side by a ring-shaped HslU homohexamer. The assembly of the HslU/HslV complex is dependent on binding of ATP.

The protein resides in the cytoplasm. It catalyses the reaction ATP-dependent cleavage of peptide bonds with broad specificity.. With respect to regulation, allosterically activated by HslU binding. Functionally, protease subunit of a proteasome-like degradation complex believed to be a general protein degrading machinery. The polypeptide is ATP-dependent protease subunit HslV (Tolumonas auensis (strain DSM 9187 / NBRC 110442 / TA 4)).